The sequence spans 104 residues: MAAKIRKGDKVIVLSGRDKGRTGEVFEVRPDADVALVRGINMIKRHQKQTQTQEGGIISKEAPIHLSNIAIVGKDGKPTRVGFKVLADGKKVRIAKSSGAEIDG.

The protein belongs to the universal ribosomal protein uL24 family. Part of the 50S ribosomal subunit.

One of two assembly initiator proteins, it binds directly to the 5'-end of the 23S rRNA, where it nucleates assembly of the 50S subunit. Functionally, one of the proteins that surrounds the polypeptide exit tunnel on the outside of the subunit. This Rhodopseudomonas palustris (strain BisB5) protein is Large ribosomal subunit protein uL24.